The sequence spans 149 residues: Transcriptional repressor NrdR (149 aa).

The segment at 3–34 is a zinc-finger region; it reads CPFCSAVDTKVIDSRLVGEGSQVRRRRQCLVC. Positions 49-139 constitute an ATP-cone domain; that stretch reads PRVIKSNEVR…VYRSFEDIRE (91 aa).

The protein belongs to the NrdR family. Zn(2+) serves as cofactor.

Functionally, negatively regulates transcription of bacterial ribonucleotide reductase nrd genes and operons by binding to NrdR-boxes. The protein is Transcriptional repressor NrdR of Pectobacterium carotovorum subsp. carotovorum (strain PC1).